The primary structure comprises 342 residues: 3-isopropylmalate dehydrogenase (342 aa).

Residues R87, R97, R121, and D212 each contribute to the substrate site. D212, D236, and D240 together coordinate Mg(2+). Position 272–284 (272–284) interacts with NAD(+); it reads GSAPDIAGRQLAD. The segment covering 319–328 has biased composition (low complexity); sequence RAAAGAAQPS. The tract at residues 319 to 342 is disordered; sequence RAAAGAAQPSTRERGEDLAARAAG. Residues 329–342 show a composition bias toward basic and acidic residues; sequence TRERGEDLAARAAG.

This sequence belongs to the isocitrate and isopropylmalate dehydrogenases family. LeuB type 2 subfamily. Homodimer. The cofactor is Mg(2+). Requires Mn(2+) as cofactor.

Its subcellular location is the cytoplasm. It carries out the reaction (2R,3S)-3-isopropylmalate + NAD(+) = 4-methyl-2-oxopentanoate + CO2 + NADH. It functions in the pathway amino-acid biosynthesis; L-leucine biosynthesis; L-leucine from 3-methyl-2-oxobutanoate: step 3/4. Its function is as follows. Catalyzes the oxidation of 3-carboxy-2-hydroxy-4-methylpentanoate (3-isopropylmalate) to 3-carboxy-4-methyl-2-oxopentanoate. The product decarboxylates to 4-methyl-2 oxopentanoate. The chain is 3-isopropylmalate dehydrogenase from Frankia casuarinae (strain DSM 45818 / CECT 9043 / HFP020203 / CcI3).